Reading from the N-terminus, the 846-residue chain is MLSGVWFLSVLTVAGILQTESRKTAKDICKIRCLCEEKENVLNINCENKGFTTVSLLQPPQYRIYQLFLNGNLLTRLYPNEFVNYSNAVTLHLGNNGLQEIRPGAFSGLKTLKRLHLNNNKLEVLREDTFLGLESLEYLQADYNYISTIEAGAFSKLNKLKVLILNDNLLLSLPSNVFRFVLLTHLDLRGNRLKVMPFAGVLEHIGGIMEIQLEENPWNCTCDLLPLKAWLDTITVFVGEIVCETPFRLHGKDVTQLTRQDLCPRKSASGDSSQRSSHSDTHVQRLTPTTNPALNPTRAPKASRPPKMRNRPTPRVTVSKDRQSFGPIMVYQTKSPVALTCPSSCVCTSQSSDNGLNVNCQERKFTNISDLQPKPTSPKKLYLTGNYLQTVYKNDLLEYSSLDLLHLGNNRIAVIQEGAFTNLTSLRRLYLNGNYLEVLYPSMFDGLQSLQYLYLEYNVIKEIKPLTFDALINLQLLFLNNNLLRSLPDNIFGGTALTRLNLRNNHFSHLPVKGVLDQLPAFIQIDLQENPWDCTCDIMGLKDWTEHANSPVIINEVTCESPAKHAGEILKFLGREAICPENPNLSDGTILSMNHNTDTPRSLSVSPSSYPELHTEVPLSVLILGLLVVFILSVCFGAGLFVFVLKRRKGVPNVPRNATNLDVSSFQLQYGSYNTETNDKADGHVYNYIPPPVGQMCQNPIYMQKEGDPVAYYRNLQDFSYGNLEEKKEEPATLAYTISATELLEKQATPREPELLYQNIAERVKELPSAGLVHYNFCTLPKRQFAPSYESRRQNQDRINKTVLYGTPRKCFVGQSKPDHPLLQAKPQSEPDYLEVLEKQTAISQL.

An N-terminal signal peptide occupies residues 1-21 (MLSGVWFLSVLTVAGILQTES). Topologically, residues 22 to 622 (RKTAKDICKI…LHTEVPLSVL (601 aa)) are extracellular. Disulfide bonds link Cys-29/Cys-35 and Cys-33/Cys-46. 6 LRR repeats span residues 63–84 (RIYQ…EFVN), 87–108 (NAVT…AFSG), 111–132 (TLKR…TFLG), 135–156 (SLEY…AFSK), 159–180 (KLKV…VFRF), and 182–203 (LLTH…GVLE). N-linked (GlcNAc...) asparagine glycosylation is present at Asn-84. The segment at 167-215 (DNLLLSLPSNVFRFVLLTHLDLRGNRLKVMPFAGVLEHIGGIMEIQLEE) is required for interaction with PTPRD. In terms of domain architecture, LRRCT 1 spans 216–265 (NPWNCTCDLLPLKAWLDTITVFVGEIVCETPFRLHGKDVTQLTRQDLCPR). N-linked (GlcNAc...) asparagine glycosylation is present at Asn-219. Cystine bridges form between Cys-220/Cys-243 and Cys-222/Cys-263. The tract at residues 261 to 322 (DLCPRKSASG…TPRVTVSKDR (62 aa)) is disordered. 2 stretches are compositionally biased toward low complexity: residues 267–276 (SASGDSSQRS) and 285–300 (RLTP…TRAP). In terms of domain architecture, LRRNT spans 332–374 (QTKSPVALTCPSSCVCTSQSSDNGLNVNCQERKFTNISDLQPK). 6 LRR repeats span residues 377 to 398 (SPKK…DLLE), 401 to 422 (SLDL…AFTN), 425 to 446 (SLRR…MFDG), 449 to 470 (SLQY…TFDA), 473 to 494 (NLQL…IFGG), and 496 to 517 (ALTR…GVLD). N-linked (GlcNAc...) asparagine glycosylation is present at Asn-422. The 52-residue stretch at 530–581 (NPWDCTCDIMGLKDWTEHANSPVIINEVTCESPAKHAGEILKFLGREAICPE) folds into the LRRCT 2 domain. A helical membrane pass occupies residues 623 to 643 (ILGLLVVFILSVCFGAGLFVF). At 644 to 846 (VLKRRKGVPN…LEKQTAISQL (203 aa)) the chain is on the cytoplasmic side. The residue at position 757 (Tyr-757) is a Phosphotyrosine.

Belongs to the SLITRK family. As to quaternary structure, interacts with PTPRD; this interaction is PTPRD splicing-dependent and may induce pre-synaptic differentiation. Interacts with NTRK2. In the adult, significant expression is detected only in the brain. Broadly expressed in embryonic brain with highest expression in ventricular layer, subventricular zone, cortical plate, pyramidal layer of hippocampus, subicular neuroepithelium, thalamus, hypothalamus and spinal cord.

Its subcellular location is the membrane. The protein resides in the cell membrane. It localises to the cell projection. It is found in the dendrite. In terms of biological role, it is involved in synaptogenesis. Promotes excitatory synapse differentiation. Suppresses neurite outgrowth. Involved in the negative regulation of NTRK2. This chain is SLIT and NTRK-like protein 2 (Slitrk2), found in Mus musculus (Mouse).